The following is a 187-amino-acid chain: Large ribosomal subunit protein uL10 (187 aa).

Belongs to the universal ribosomal protein uL10 family. As to quaternary structure, part of the ribosomal stalk of the 50S ribosomal subunit. The N-terminus interacts with L11 and the large rRNA to form the base of the stalk. The C-terminus forms an elongated spine to which L12 dimers bind in a sequential fashion forming a multimeric L10(L12)X complex.

Its function is as follows. Forms part of the ribosomal stalk, playing a central role in the interaction of the ribosome with GTP-bound translation factors. This chain is Large ribosomal subunit protein uL10, found in Roseiflexus castenholzii (strain DSM 13941 / HLO8).